The following is a 374-amino-acid chain: uncharacterized protein (374 aa).

The protein belongs to the mimivirus L41 family.

This is an uncharacterized protein from Acanthamoeba polyphaga (Amoeba).